The sequence spans 676 residues: MDSIHPFIYDLIVVGAGHAGCEAAHAAARMGCRTLLLTIDLDKLAHMSCNPSIGGPAKGHLVREIDALGGLMGRVTDRTFIQIRLLNESKGPAVQAPRAQADKRLYAKVMKETLETTPNLDLRQAMIERILLPQPPGRNGSAAPADDPAGVQPGHYAVITHTRRVYQSRALVLTTGTFLRGRAITGEAIWGAGRAGEAPATALGEDLAALGFPLVRLKTGTPPRIDARTIDFSQTSVQQGSPTPLFFGHYYRVLGEIPPEPAFTGAPACAYPEPLRAAWRPQLPCYLVHTTPEFHEIVRRNLDRAPLFSGIIEGVGPRYCPSIEDKIVRFADKERHGLFLEPEGWSTHEVYVQGCNTSLPEDVQWAMLRSIPALRRVELMRAGYAIEYDALATGEIAADMSSRRIPGLFFAGQINGTTGYEEAAAQGLMAGINAARFIQGKPPIILRRDEAYIGVLIDDLITKEIREPYRMFTSRAEHRLLLRTDNADLRLTRLAGELGLVDRERVEAVERKREESERLLRVLRGQRLFPSAATNARLSDVGIAPLSSEMSAEDVLRRPEVRYEQLRQALDLPACDADIAEQVEIEAKYGGYLQKQQREVERLRRMEARRIPPDFDFTALRGLRNEARQTLQRFRPATVGQAARLAGINPADVAILIVALERRGRRDMALDVRSGA.

15-20 contacts FAD; the sequence is GAGHAG. Residue 316 to 330 participates in NAD(+) binding; it reads GPRYCPSIEDKIVRF.

Belongs to the MnmG family. In terms of assembly, homodimer. Heterotetramer of two MnmE and two MnmG subunits. It depends on FAD as a cofactor.

The protein localises to the cytoplasm. In terms of biological role, NAD-binding protein involved in the addition of a carboxymethylaminomethyl (cmnm) group at the wobble position (U34) of certain tRNAs, forming tRNA-cmnm(5)s(2)U34. The sequence is that of tRNA uridine 5-carboxymethylaminomethyl modification enzyme MnmG from Roseiflexus castenholzii (strain DSM 13941 / HLO8).